Here is a 103-residue protein sequence, read N- to C-terminus: MHVKKGDKVQVITGKDKGKQGVILVAFPKQNRVIVEGVNIVKKHSKPSQLNPQGGIITKEAPIHVSNVMVLDPKTGEPTRVGFKVEDGKKVRIAKKSGELLDK.

Belongs to the universal ribosomal protein uL24 family. As to quaternary structure, part of the 50S ribosomal subunit.

One of two assembly initiator proteins, it binds directly to the 5'-end of the 23S rRNA, where it nucleates assembly of the 50S subunit. Its function is as follows. One of the proteins that surrounds the polypeptide exit tunnel on the outside of the subunit. The sequence is that of Large ribosomal subunit protein uL24 from Bacillus mycoides (strain KBAB4) (Bacillus weihenstephanensis).